The chain runs to 422 residues: MEEMMMNDPSAMVIYEEEVTTAPNLPCSLIQQRSWDEEKPIGYELTNTKCYKTPNGVQKTATIQREQLSTSKDFGEQQIVEMDGEFSIEGTDMHAIPCTSSSMQPSTSSNPSSGEHQPVPLRRMAIKIGQRVLRFKVISAEEAPEAPLDTQDSWINDPKPVTTPKALAGLYRCTNCKTYFGNKEVYQRHIQEVHGDARPFRCFNCGMRFANKTSMTHHLKDHSLLKPMFSCDYCPRIFSKLESKTRHHKMHFTRSTCQTCMRFFTTEDALRHHQSTAHPATFDSGPPPEDLLPNGKSARYSCSYCNLRFHFKKDMLVHERIHTGEKPYSCGYCMKSFAQSQALTAHIRTHTKELPYGCGKCDKRFRDNSCLRKHELAAHTDEPIVRPISVAYSNQVQKQMQRQRENRRKQELLIAERHPYRI.

A disordered region spans residues 95–119 (AIPCTSSSMQPSTSSNPSSGEHQPV). Positions 99-113 (TSSSMQPSTSSNPSS) are enriched in low complexity. C2H2-type zinc fingers lie at residues 171-194 (YRCTNCKTYFGNKEVYQRHIQEVH), 200-222 (FRCFNCGMRFANKTSMTHHLKDH), 229-251 (FSCDYCPRIFSKLESKTRHHKMH), 255-278 (STCQTCMRFFTTEDALRHHQSTAH), 300-322 (YSCSYCNLRFHFKKDMLVHERIH), 328-350 (YSCGYCMKSFAQSQALTAHIRTH), and 356-379 (YGCGKCDKRFRDNSCLRKHELAAH).

Expressed in vulval cells and all somatic gonad structures such as spermatheca, sheath cells, uterine cells and distal tip cells.

The protein resides in the nucleus. Functionally, probable zinc finger transcription factor that acts as a transcriptional repressor. Acts redundantly with the transcriptional repressor lin-35 to control the development of somatic gonad lineages. May, in addition, suppress sensitivity to RNAi. This is Zinc finger protein zfp-2 from Caenorhabditis elegans.